We begin with the raw amino-acid sequence, 243 residues long: Ribosomal RNA small subunit methyltransferase J (243 aa).

S-adenosyl-L-methionine contacts are provided by residues 112-113 and D164; that span reads ER.

This sequence belongs to the methyltransferase superfamily. RsmJ family.

Its subcellular location is the cytoplasm. It catalyses the reaction guanosine(1516) in 16S rRNA + S-adenosyl-L-methionine = N(2)-methylguanosine(1516) in 16S rRNA + S-adenosyl-L-homocysteine + H(+). Functionally, specifically methylates the guanosine in position 1516 of 16S rRNA. This chain is Ribosomal RNA small subunit methyltransferase J, found in Legionella pneumophila (strain Corby).